A 325-amino-acid polypeptide reads, in one-letter code: Brorin (325 aa).

Residues methionine 1–cysteine 27 form the signal peptide. The interval alanine 37–glutamate 121 is disordered. Basic and acidic residues-rich tracts occupy residues glycine 44–proline 56 and arginine 64–serine 78. Residues arginine 114 to aspartate 116 carry the Mediates cell adhesion motif. VWFC domains lie at lysine 153 to lysine 212 and asparagine 216 to lysine 274.

In terms of assembly, peripherally associated with AMPAR complex. AMPAR complex consists of an inner core made of 4 pore-forming GluA/GRIA proteins (GRIA1, GRIA2, GRIA3 and GRIA4) and 4 major auxiliary subunits arranged in a twofold symmetry. One of the two pairs of distinct binding sites is occupied either by CNIH2, CNIH3 or CACNG2, CACNG3. The other harbors CACNG2, CACNG3, CACNG4, CACNG8 or GSG1L. This inner core of AMPAR complex is complemented by outer core constituents binding directly to the GluA/GRIA proteins at sites distinct from the interaction sites of the inner core constituents. Outer core constituents include at least PRRT1, PRRT2, CKAMP44/SHISA9, FRRS1L and NRN1. The proteins of the inner and outer core serve as a platform for other, more peripherally associated AMPAR constituents, including VWC2. Alone or in combination, these auxiliary subunits control the gating and pharmacology of the AMPAR complex and profoundly impact their biogenesis and protein processing.

It localises to the secreted. Its subcellular location is the extracellular space. The protein resides in the extracellular matrix. The protein localises to the basement membrane. It is found in the synapse. In terms of biological role, BMP antagonist which may play a role in neural development. Promotes cell adhesion. The polypeptide is Brorin (VWC2) (Homo sapiens (Human)).